The sequence spans 104 residues: Urease subunit beta (104 aa).

This sequence belongs to the urease beta subunit family. As to quaternary structure, heterotrimer of UreA (gamma), UreB (beta) and UreC (alpha) subunits. Three heterotrimers associate to form the active enzyme.

The protein resides in the cytoplasm. The enzyme catalyses urea + 2 H2O + H(+) = hydrogencarbonate + 2 NH4(+). It participates in nitrogen metabolism; urea degradation; CO(2) and NH(3) from urea (urease route): step 1/1. The protein is Urease subunit beta of Rhodopseudomonas palustris (strain BisB18).